A 157-amino-acid chain; its full sequence is Transcription elongation factor GreA (157 aa).

Residues 9–30 adopt a coiled-coil conformation; sequence LEGAQQLKEELKRRKTTDRKRI.

This sequence belongs to the GreA/GreB family.

Functionally, necessary for efficient RNA polymerase transcription elongation past template-encoded arresting sites. The arresting sites in DNA have the property of trapping a certain fraction of elongating RNA polymerases that pass through, resulting in locked ternary complexes. Cleavage of the nascent transcript by cleavage factors such as GreA or GreB allows the resumption of elongation from the new 3'terminus. GreA releases sequences of 2 to 3 nucleotides. This is Transcription elongation factor GreA from Magnetococcus marinus (strain ATCC BAA-1437 / JCM 17883 / MC-1).